The chain runs to 246 residues: Large ribosomal subunit protein uL3 (246 aa).

Disordered stretches follow at residues 140–162 and 215–246; these read SHRS…NKKM and DVPL…EENA. Gln151 bears the N5-methylglutamine mark. Low complexity predominate over residues 234–246; it reads EAAPEAPASEENA.

It belongs to the universal ribosomal protein uL3 family. Part of the 50S ribosomal subunit. Forms a cluster with proteins L14 and L19. In terms of processing, methylated by PrmB.

One of the primary rRNA binding proteins, it binds directly near the 3'-end of the 23S rRNA, where it nucleates assembly of the 50S subunit. This chain is Large ribosomal subunit protein uL3, found in Methylorubrum populi (strain ATCC BAA-705 / NCIMB 13946 / BJ001) (Methylobacterium populi).